Consider the following 756-residue polypeptide: 5-methyltetrahydropteroyltriglutamate--homocysteine methyltransferase (756 aa).

5-methyltetrahydropteroyltri-L-glutamate is bound by residues 16–19 (RELK) and lysine 116. Residues 435 to 437 (IGS) and glutamate 488 each bind L-homocysteine. Residues 435-437 (IGS) and glutamate 488 contribute to the L-methionine site. Residues 519–520 (RC) and tryptophan 565 each bind 5-methyltetrahydropteroyltri-L-glutamate. Aspartate 603 contacts L-homocysteine. Position 603 (aspartate 603) interacts with L-methionine. 5-methyltetrahydropteroyltri-L-glutamate is bound at residue glutamate 609. Residues histidine 645, cysteine 647, and glutamate 669 each contribute to the Zn(2+) site. Residue histidine 698 is the Proton donor of the active site. Cysteine 730 provides a ligand contact to Zn(2+).

It belongs to the vitamin-B12 independent methionine synthase family. It depends on Zn(2+) as a cofactor.

The catalysed reaction is 5-methyltetrahydropteroyltri-L-glutamate + L-homocysteine = tetrahydropteroyltri-L-glutamate + L-methionine. Its pathway is amino-acid biosynthesis; L-methionine biosynthesis via de novo pathway; L-methionine from L-homocysteine (MetE route): step 1/1. Functionally, catalyzes the transfer of a methyl group from 5-methyltetrahydrofolate to homocysteine resulting in methionine formation. In Marinobacter nauticus (strain ATCC 700491 / DSM 11845 / VT8) (Marinobacter aquaeolei), this protein is 5-methyltetrahydropteroyltriglutamate--homocysteine methyltransferase.